A 296-amino-acid chain; its full sequence is 4-hydroxybenzoate octaprenyltransferase (296 aa).

A run of 8 helical transmembrane segments spans residues 28–48 (PIGI…AGNG), 52–72 (LANV…GCCI), 102–122 (ALAL…CTNS), 145–167 (TYYP…FTAA), 174–196 (SAWL…YAMV), 219–239 (NIIL…GSRF), 241–261 (LGGW…WEYW), and 275–295 (FLHN…DYAF).

The protein belongs to the UbiA prenyltransferase family. Mg(2+) serves as cofactor.

Its subcellular location is the cell inner membrane. The enzyme catalyses all-trans-octaprenyl diphosphate + 4-hydroxybenzoate = 4-hydroxy-3-(all-trans-octaprenyl)benzoate + diphosphate. It functions in the pathway cofactor biosynthesis; ubiquinone biosynthesis. Catalyzes the prenylation of para-hydroxybenzoate (PHB) with an all-trans polyprenyl group. Mediates the second step in the final reaction sequence of ubiquinone-8 (UQ-8) biosynthesis, which is the condensation of the polyisoprenoid side chain with PHB, generating the first membrane-bound Q intermediate 3-octaprenyl-4-hydroxybenzoate. This chain is 4-hydroxybenzoate octaprenyltransferase, found in Pseudomonas putida (strain GB-1).